A 406-amino-acid polypeptide reads, in one-letter code: 5-cytosine rRNA methyltransferase NSUN4 (406 aa).

8 residues coordinate S-adenosyl-L-methionine: Gly207, Gly208, Lys209, Asp226, Arg231, Asp259, Gly260, and Asp277. Cys332 serves as the catalytic Nucleophile.

This sequence belongs to the class I-like SAM-binding methyltransferase superfamily. RsmB/NOP family.

It is found in the mitochondrion. The catalysed reaction is a cytidine in rRNA + S-adenosyl-L-methionine = a 5-methylcytidine in rRNA + S-adenosyl-L-homocysteine + H(+). The enzyme catalyses a cytidine in mRNA + S-adenosyl-L-methionine = a 5-methylcytidine in mRNA + S-adenosyl-L-homocysteine + H(+). In terms of biological role, involved in mitochondrial ribosome large subunit biogenesis. Its function is as follows. Mitochondrial RNA cytosine C(5)-methyltransferase that methylates cytosine to 5-methylcytosine (m5C) in various RNAs, such as rRNAs, mRNAs and some long non-coding RNAs (lncRNAs). Involved in mitochondrial ribosome small subunit (SSU) maturation by catalyzing methylation of mitochondrial 12S rRNA. The polypeptide is 5-cytosine rRNA methyltransferase NSUN4 (nsun4) (Xenopus tropicalis (Western clawed frog)).